Reading from the N-terminus, the 591-residue chain is Aspartate--tRNA(Asp/Asn) ligase (591 aa).

Residue Glu174 coordinates L-aspartate. Residues 198–201 (QLFK) form an aspartate region. Arg220 lines the L-aspartate pocket. ATP is bound by residues 220–222 (RDE) and Gln229. His450 lines the L-aspartate pocket. Residue Glu483 coordinates ATP. Arg490 provides a ligand contact to L-aspartate. 535–538 (GLDR) contributes to the ATP binding site.

Belongs to the class-II aminoacyl-tRNA synthetase family. Type 1 subfamily. Homodimer.

The protein resides in the cytoplasm. The enzyme catalyses tRNA(Asx) + L-aspartate + ATP = L-aspartyl-tRNA(Asx) + AMP + diphosphate. Functionally, aspartyl-tRNA synthetase with relaxed tRNA specificity since it is able to aspartylate not only its cognate tRNA(Asp) but also tRNA(Asn). Reaction proceeds in two steps: L-aspartate is first activated by ATP to form Asp-AMP and then transferred to the acceptor end of tRNA(Asp/Asn). The protein is Aspartate--tRNA(Asp/Asn) ligase of Pseudomonas fluorescens (strain ATCC BAA-477 / NRRL B-23932 / Pf-5).